We begin with the raw amino-acid sequence, 578 residues long: Glutamate--tRNA ligase (578 aa).

Positions Pro97–Asn107 match the 'HIGH' region motif.

It belongs to the class-I aminoacyl-tRNA synthetase family. Glutamate--tRNA ligase type 2 subfamily.

It localises to the cytoplasm. It carries out the reaction tRNA(Glu) + L-glutamate + ATP = L-glutamyl-tRNA(Glu) + AMP + diphosphate. Functionally, catalyzes the attachment of glutamate to tRNA(Glu) in a two-step reaction: glutamate is first activated by ATP to form Glu-AMP and then transferred to the acceptor end of tRNA(Glu). This chain is Glutamate--tRNA ligase, found in Hyperthermus butylicus (strain DSM 5456 / JCM 9403 / PLM1-5).